A 174-amino-acid chain; its full sequence is Adenylate kinase (174 aa).

Residues serine 12–valine 41 are NMP. AMP contacts are provided by residues threonine 13, arginine 18, glycine 39–valine 41, glycine 67–arginine 70, and glutamine 74. Residues glycine 104–aspartate 141 form an LID region. ATP contacts are provided by residues arginine 105 and threonine 114 to tyrosine 115. AMP contacts are provided by arginine 138 and arginine 149.

Belongs to the adenylate kinase family. In terms of assembly, monomer.

Its subcellular location is the cytoplasm. It catalyses the reaction AMP + ATP = 2 ADP. It functions in the pathway purine metabolism; AMP biosynthesis via salvage pathway; AMP from ADP: step 1/1. In terms of biological role, catalyzes the reversible transfer of the terminal phosphate group between ATP and AMP. Plays an important role in cellular energy homeostasis and in adenine nucleotide metabolism. This chain is Adenylate kinase, found in Neisseria animalis.